The following is a 403-amino-acid chain: MAIIHPKVRGFICTTTHPKGCELNVRDQIEATRKLGVREDGPKKVLVIGASSGYGLAARITAAFGFKADTLGVFFEKPGTETKAGTAGWYNAAAFDKFAKAEGLYSKSINGDAFSDEARAKVIELIKNEMGGKVDLVIYSLASPVRKLPQTGEVIRSALKPIGQPYKSTAIDTNKDTIIEASIEPATEQEIADTVTVMGGQDWQLWIDALAGANVLAEGARTVAFSYIGSDITWPIYWHGALGQAKQDLDETALRLNQKLAGEVKGGANVAVLKSVVTQASSAIPVMPLYLSMVFKIMQEKGVHEGTQDQLDRMYRDRMYRTDGAPAEVDEKGRLRLDDWELRDDVQNACKALWPQVTTENLFELTDYAGYKKQFLNLFGFERADVDYDKDVATDVKFDCVEL.

Residues 49–54 (GASSGY), 75–76 (FE), 112–113 (DA), and 141–142 (LA) each bind NAD(+). Tyrosine 227 contacts substrate. Tyrosine 237 acts as the Proton donor in catalysis. Residues lysine 246 and 276-278 (VVT) each bind NAD(+).

The protein belongs to the TER reductase family. As to quaternary structure, monomer.

The catalysed reaction is a 2,3-saturated acyl-[ACP] + NAD(+) = a (2E)-enoyl-[ACP] + NADH + H(+). The protein operates within lipid metabolism; fatty acid biosynthesis. Functionally, involved in the final reduction of the elongation cycle of fatty acid synthesis (FAS II). Catalyzes the reduction of a carbon-carbon double bond in an enoyl moiety that is covalently linked to an acyl carrier protein (ACP). This chain is Enoyl-[acyl-carrier-protein] reductase [NADH], found in Pseudomonas putida (strain ATCC 47054 / DSM 6125 / CFBP 8728 / NCIMB 11950 / KT2440).